We begin with the raw amino-acid sequence, 222 residues long: GTP cyclohydrolase 1 (222 aa).

Residues cysteine 111, histidine 114, and cysteine 182 each coordinate Zn(2+).

It belongs to the GTP cyclohydrolase I family. Homomer.

The catalysed reaction is GTP + H2O = 7,8-dihydroneopterin 3'-triphosphate + formate + H(+). The protein operates within cofactor biosynthesis; 7,8-dihydroneopterin triphosphate biosynthesis; 7,8-dihydroneopterin triphosphate from GTP: step 1/1. The protein is GTP cyclohydrolase 1 of Salmonella gallinarum (strain 287/91 / NCTC 13346).